The primary structure comprises 452 residues: Poly(A) polymerase I (452 aa).

Catalysis depends on residues Asp-68, Asp-70, and Asp-150. The disordered stretch occupies residues 427-452; it reads EQQRLHPKPKKKYYRPRRRKTTCSAE. Positions 431–452 are enriched in basic residues; it reads LHPKPKKKYYRPRRRKTTCSAE.

The protein belongs to the tRNA nucleotidyltransferase/poly(A) polymerase family.

The catalysed reaction is RNA(n) + ATP = RNA(n)-3'-adenine ribonucleotide + diphosphate. Its function is as follows. Adds poly(A) tail to the 3' end of many RNAs, which usually targets these RNAs for decay. Plays a significant role in the global control of gene expression, through influencing the rate of transcript degradation, and in the general RNA quality control. In Haemophilus influenzae (strain ATCC 51907 / DSM 11121 / KW20 / Rd), this protein is Poly(A) polymerase I.